A 466-amino-acid chain; its full sequence is Phosphomethylpyrimidine synthase (466 aa).

Substrate contacts are provided by residues Asn80, Met109, Tyr139, His175, 195 to 197, 236 to 239, and Glu275; these read SRG and DSLR. His279 contributes to the Zn(2+) binding site. Substrate is bound at residue Tyr302. His343 serves as a coordination point for Zn(2+). 3 residues coordinate [4Fe-4S] cluster: Cys423, Cys426, and Cys431.

It belongs to the ThiC family. It depends on [4Fe-4S] cluster as a cofactor.

The enzyme catalyses 5-amino-1-(5-phospho-beta-D-ribosyl)imidazole + S-adenosyl-L-methionine = 4-amino-2-methyl-5-(phosphooxymethyl)pyrimidine + CO + 5'-deoxyadenosine + formate + L-methionine + 3 H(+). It functions in the pathway cofactor biosynthesis; thiamine diphosphate biosynthesis. In terms of biological role, catalyzes the synthesis of the hydroxymethylpyrimidine phosphate (HMP-P) moiety of thiamine from aminoimidazole ribotide (AIR) in a radical S-adenosyl-L-methionine (SAM)-dependent reaction. This Prochlorococcus marinus (strain NATL2A) protein is Phosphomethylpyrimidine synthase.